Here is a 337-residue protein sequence, read N- to C-terminus: Lipoyl synthase (337 aa).

[4Fe-4S] cluster is bound by residues Cys81, Cys86, Cys92, Cys107, Cys111, Cys114, and Ser323. The Radical SAM core domain maps to 93–312 (FSHGTATFMI…EEYGNALGFS (220 aa)).

It belongs to the radical SAM superfamily. Lipoyl synthase family. The cofactor is [4Fe-4S] cluster.

It localises to the cytoplasm. The enzyme catalyses [[Fe-S] cluster scaffold protein carrying a second [4Fe-4S](2+) cluster] + N(6)-octanoyl-L-lysyl-[protein] + 2 oxidized [2Fe-2S]-[ferredoxin] + 2 S-adenosyl-L-methionine + 4 H(+) = [[Fe-S] cluster scaffold protein] + N(6)-[(R)-dihydrolipoyl]-L-lysyl-[protein] + 4 Fe(3+) + 2 hydrogen sulfide + 2 5'-deoxyadenosine + 2 L-methionine + 2 reduced [2Fe-2S]-[ferredoxin]. Its pathway is protein modification; protein lipoylation via endogenous pathway; protein N(6)-(lipoyl)lysine from octanoyl-[acyl-carrier-protein]: step 2/2. In terms of biological role, catalyzes the radical-mediated insertion of two sulfur atoms into the C-6 and C-8 positions of the octanoyl moiety bound to the lipoyl domains of lipoate-dependent enzymes, thereby converting the octanoylated domains into lipoylated derivatives. The chain is Lipoyl synthase from Xanthomonas campestris pv. campestris (strain 8004).